Reading from the N-terminus, the 338-residue chain is P2Y purinoceptor 14 (338 aa).

The Extracellular segment spans residues 1-29; the sequence is MINSTSTQPPDESCSQNLLITQQIIPVLY. An N-linked (GlcNAc...) asparagine glycan is attached at Asn3. The chain crosses the membrane as a helical span at residues 30 to 50; that stretch reads CMVFIAGILLNGVSGWIFFYV. Topologically, residues 51-55 are cytoplasmic; the sequence is PSSKS. The chain crosses the membrane as a helical span at residues 56-76; it reads FIIYLKNIVIADFVMSLTFPF. Residues 77–96 lie on the Extracellular side of the membrane; it reads KILGDSGLGPWQLNVFVCRV. An intrachain disulfide couples Cys94 to Cys172. The chain crosses the membrane as a helical span at residues 97-117; it reads SAVLFYVNMYVSIVFFGLISF. The Cytoplasmic segment spans residues 118-139; sequence DRYYKIVKPLWTSFIQSVSYSK. Residues 140–160 traverse the membrane as a helical segment; sequence LLSVIVWMLMLLLAVPNIILT. Residue Asn161 is glycosylated (N-linked (GlcNAc...) asparagine). The Extracellular segment spans residues 161–188; the sequence is NQSVREVTQIKCIELKSELGRKWHKASN. A helical membrane pass occupies residues 189-209; it reads YIFVAIFWIVFLLLIVFYTAI. Over 210 to 234 the chain is Cytoplasmic; it reads TKKIFKSHLKSSRNSTSVKKKSSRN. Residues 235–255 form a helical membrane-spanning segment; the sequence is IFSIVFVFFVCFVPYHIARIP. Topologically, residues 256-278 are extracellular; sequence YTKSQTEAHYSCQSKEILRYMKE. Residues 279 to 299 form a helical membrane-spanning segment; the sequence is FTLLLSAANVCLDPIIYFFLC. The Cytoplasmic segment spans residues 300–338; it reads QPFREILCKKLHIPLKAQNDLDISRIKRGNTTLESTDTL.

Belongs to the G-protein coupled receptor 1 family. Highest expression in the placenta, adipose tissue, stomach and intestine, intermediate levels in the brain, spleen, lung and heart, lowest levels in the kidney.

The protein resides in the cell membrane. In terms of biological role, receptor for UDP-glucose and other UDP-sugar coupled to G-proteins. Not activated by ATP, ADP, UTP or ATP. In Homo sapiens (Human), this protein is P2Y purinoceptor 14 (P2RY14).